Here is a 241-residue protein sequence, read N- to C-terminus: ATP synthase subunit a (241 aa).

A run of 5 helical transmembrane segments spans residues 30–50 (GQVF…VVVG), 91–111 (FIGT…LVPW), 128–148 (INTT…AGLS), 193–213 (LVVA…VMFL), and 214–234 (GLFT…YYIG).

The protein belongs to the ATPase A chain family. F-type ATPases have 2 components, CF(1) - the catalytic core - and CF(0) - the membrane proton channel. CF(1) has five subunits: alpha(3), beta(3), gamma(1), delta(1), epsilon(1). CF(0) has four main subunits: a, b, b' and c.

The protein localises to the cellular thylakoid membrane. Key component of the proton channel; it plays a direct role in the translocation of protons across the membrane. The chain is ATP synthase subunit a from Prochlorococcus marinus (strain MIT 9313).